A 329-amino-acid polypeptide reads, in one-letter code: NADH-quinone oxidoreductase subunit H (329 aa).

Helical transmembrane passes span 9–29 (LIKI…ATYI), 42–62 (GPCY…IKLF), 75–95 (FIFT…MAPI), 117–137 (IGFL…ILAG), 154–174 (IQLL…LMVV), 188–208 (GGFL…FLIA), 238–258 (LKWG…SFVI), 269–291 (WGFI…LSMW), and 309–329 (WKIM…IILI).

Belongs to the complex I subunit 1 family. As to quaternary structure, NDH-1 is composed of 14 different subunits. Subunits NuoA, H, J, K, L, M, N constitute the membrane sector of the complex.

It localises to the cell inner membrane. The catalysed reaction is a quinone + NADH + 5 H(+)(in) = a quinol + NAD(+) + 4 H(+)(out). Its function is as follows. NDH-1 shuttles electrons from NADH, via FMN and iron-sulfur (Fe-S) centers, to quinones in the respiratory chain. The immediate electron acceptor for the enzyme in this species is believed to be ubiquinone. Couples the redox reaction to proton translocation (for every two electrons transferred, four hydrogen ions are translocated across the cytoplasmic membrane), and thus conserves the redox energy in a proton gradient. This subunit may bind ubiquinone. The chain is NADH-quinone oxidoreductase subunit H from Helicobacter pylori (strain P12).